Here is a 335-residue protein sequence, read N- to C-terminus: Beta-ketoacyl-[acyl-carrier-protein] synthase III (335 aa).

Residues C116 and H256 contribute to the active site. An ACP-binding region spans residues 257–261 (QANLR). The active site involves N286.

The protein belongs to the thiolase-like superfamily. FabH family. As to quaternary structure, homodimer.

The protein localises to the cytoplasm. It catalyses the reaction malonyl-[ACP] + acetyl-CoA + H(+) = 3-oxobutanoyl-[ACP] + CO2 + CoA. The protein operates within lipid metabolism; fatty acid biosynthesis. In terms of biological role, catalyzes the condensation reaction of fatty acid synthesis by the addition to an acyl acceptor of two carbons from malonyl-ACP. Catalyzes the first condensation reaction which initiates fatty acid synthesis and may therefore play a role in governing the total rate of fatty acid production. Possesses both acetoacetyl-ACP synthase and acetyl transacylase activities. Its substrate specificity determines the biosynthesis of branched-chain and/or straight-chain of fatty acids. The protein is Beta-ketoacyl-[acyl-carrier-protein] synthase III of Porphyromonas gingivalis (strain ATCC 33277 / DSM 20709 / CIP 103683 / JCM 12257 / NCTC 11834 / 2561).